The chain runs to 634 residues: RNA polymerase sigma factor RpoD (634 aa).

A disordered region spans residues 177–202 (LHDETPENDEENSSETEGEEHEDNHL). Acidic residues predominate over residues 182–197 (PENDEENSSETEGEEH). The sigma-70 factor domain-2 stretch occupies residues 385 to 455 (MIEANLRLVI…TRAIADQART (71 aa)). The Interaction with polymerase core subunit RpoC signature appears at 409-412 (DLIQ). Positions 464–541 (ETINKILRTS…DKNAVAPIDA (78 aa)) are sigma-70 factor domain-3. Residues 554-607 (VLATLTPREERVLRMRFGIGMNTDHTLEEVGQQFKVTRERIRQIESKALRKLQH) are sigma-70 factor domain-4. The segment at residues 580 to 599 (LEEVGQQFKVTRERIRQIES) is a DNA-binding region (H-T-H motif). The segment at 608–634 (PIRSKKLNSFRSGGKRGDGNSSDLLEA) is disordered.

It belongs to the sigma-70 factor family. RpoD/SigA subfamily. Interacts transiently with the RNA polymerase catalytic core.

The protein resides in the cytoplasm. Functionally, sigma factors are initiation factors that promote the attachment of RNA polymerase to specific initiation sites and are then released. This sigma factor is the primary sigma factor during exponential growth. The sequence is that of RNA polymerase sigma factor RpoD from Rickettsia conorii (strain ATCC VR-613 / Malish 7).